The primary structure comprises 54 residues: Large ribosomal subunit protein bL33C (54 aa).

Belongs to the bacterial ribosomal protein bL33 family.

In Streptomyces coelicolor (strain ATCC BAA-471 / A3(2) / M145), this protein is Large ribosomal subunit protein bL33C (rpmG3).